The chain runs to 149 residues: Nucleoside diphosphate kinase (149 aa).

6 residues coordinate ATP: Lys-9, Phe-57, Arg-85, Thr-91, Arg-102, and Asn-112. His-115 acts as the Pros-phosphohistidine intermediate in catalysis.

It belongs to the NDK family. Requires Mg(2+) as cofactor.

The protein resides in the cytoplasm. It catalyses the reaction a 2'-deoxyribonucleoside 5'-diphosphate + ATP = a 2'-deoxyribonucleoside 5'-triphosphate + ADP. The catalysed reaction is a ribonucleoside 5'-diphosphate + ATP = a ribonucleoside 5'-triphosphate + ADP. Major role in the synthesis of nucleoside triphosphates other than ATP. The ATP gamma phosphate is transferred to the NDP beta phosphate via a ping-pong mechanism, using a phosphorylated active-site intermediate. This Methanosarcina barkeri (strain Fusaro / DSM 804) protein is Nucleoside diphosphate kinase.